A 114-amino-acid chain; its full sequence is Hydrogenase maturation factor HypA (114 aa).

A Ni(2+)-binding site is contributed by H2. Residues C73, C76, C90, and C93 each contribute to the Zn(2+) site.

It belongs to the HypA/HybF family.

Functionally, involved in the maturation of [NiFe] hydrogenases. Required for nickel insertion into the metal center of the hydrogenase. The protein is Hydrogenase maturation factor HypA of Chloroflexus aggregans (strain MD-66 / DSM 9485).